We begin with the raw amino-acid sequence, 286 residues long: PTS system mannose-specific EIID component (286 aa).

N-formylmethionine is present on Met-1. Over 1–17 (MSEMVDTTQTTTEKKLT) the chain is Cytoplasmic. Residues 14–284 (KKLTQSDIRG…GIAGYACGLL (271 aa)) enclose the PTS EIID domain. Residues 18 to 55 (QSDIRGVFLRSNLFQGSWNFERMQALGFCFSMVPAIRR) lie within the membrane without spanning it. The Cytoplasmic portion of the chain corresponds to 56-62 (LYPENNE). Residues 63 to 95 (ARKQAIRRHLEFFNTQPFVAAPILGVTLALEEQ) lie within the membrane without spanning it. Residues 96–103 (RANGAEID) are Cytoplasmic-facing. The hydrophobic stretch at 104–143 (DGAINGIKVGLMGPLAGVGDPIFWGTVRPVFAALGAGIAM) threads the membrane. Over 144 to 147 (SGSL) the chain is Periplasmic. A membrane pass occupies residues 148–176 (LGPLLFFILFNLVRLATRYYGVAYGYSKG). Over 177–186 (IDIVKDMGGG) the chain is Cytoplasmic. Over 187–212 (FLQKLTEGASILGLFVMGALVNKWTH) the chain traverses the membrane. Residues 213-244 (VNIPLVVSRITDQTGKEHVTTVQTILDQLMPG) are Periplasmic-facing. At 245 to 258 (LVPLLLTFACMWLL) the chain is embedded in the membrane. Residues 259 to 264 (RKKVNP) lie on the Cytoplasmic side of the membrane. The chain crosses the lipid bilayer at residues 265-283 (LWIIVGFFVIGIAGYACGL). The Periplasmic segment spans residues 284–286 (LGL).

Homotrimer of protomers that are composed of two subunits, IIC and IID.

Its subcellular location is the cell inner membrane. The phosphoenolpyruvate-dependent sugar phosphotransferase system (sugar PTS), a major carbohydrate active transport system, catalyzes the phosphorylation of incoming sugar substrates concomitantly with their translocation across the cell membrane. The enzyme II ManXYZ PTS system is involved in mannose transport. This chain is PTS system mannose-specific EIID component (manZ), found in Escherichia coli O6:H1 (strain CFT073 / ATCC 700928 / UPEC).